The primary structure comprises 1317 residues: WASH complex subunit 2 (1317 aa).

Residues M1–D219 are sufficient for interaction with WASHC3, WASHC4 and WASHC5; required for interaction with WASHC1. Phosphoserine occurs at positions 157, 159, 204, 205, and 209. A compositionally biased stretch (low complexity) spans G201–D213. A disordered region spans residues G201–S630. Composition is skewed to acidic residues over residues D219–D232 and D250–E274. S284 bears the Phosphoserine mark. Composition is skewed to basic and acidic residues over residues L289–P325 and D366–P376. T323 carries the post-translational modification Phosphothreonine. The tract at residues S348–Q582 is sufficient for interaction with CCDC93. The interval R349–Q1317 is interaction with VPS35. The short motif at L358–F368 is the LFa 1 element. Low complexity predominate over residues A379–V399. Phosphoserine occurs at positions 385 and 387. 2 consecutive short sequence motifs (LFa) follow at residues L433 to F445 and I464 to F473. Positions T500–G518 are enriched in polar residues. 2 short sequence motifs (LFa) span residues L519–F530 and L554–F565. A phosphoserine mark is found at S521 and S526. The span at L529–L548 shows a compositional bias: low complexity. The segment covering P569 to Q582 has biased composition (low complexity). Over residues E583–K592 the composition is skewed to basic and acidic residues. Residues L599 to T611 carry the LFa 6 motif. Phosphoserine occurs at positions 601 and 602. Over residues S613–L627 the composition is skewed to basic and acidic residues. 2 short sequence motifs (LFa) span residues L646–F657 and L673–F685. Residues T667–Q817 form a disordered region. A Phosphoserine modification is found at S710. Residues V717–G744 are compositionally biased toward basic and acidic residues. 2 positions are modified to phosphoserine: S763 and S778. Residues E788–P810 are compositionally biased toward basic and acidic residues. 2 consecutive short sequence motifs (LFa) follow at residues V815–F823 and D832–F838. S853 is subject to Phosphoserine. The short motif at L854–F864 is the LFa 11 element. 2 disordered regions span residues A867–S926 and E960–P1079. The segment covering P874–W906 has biased composition (basic and acidic residues). Positions Q912–Q1317 are interaction with phospholipids. The span at N1003–R1021 shows a compositional bias: basic residues. The tract at residues K1004–R1022 is required for interaction with F-actin-capping protein subunit alpha (CAPZA1 or CAPZA2 or CAPZA3). 4 positions are modified to phosphoserine: S1029, S1047, S1064, and S1092. Positions L1107–F1114 match the LFa 12 motif. The tract at residues G1119–S1141 is disordered. 6 consecutive short sequence motifs (LFa) follow at residues V1147–F1161, L1177–F1185, I1210–F1216, L1238–F1246, V1266–F1275, and I1306–F1314. 3 positions are modified to phosphoserine: S1152, S1155, and S1156. The disordered stretch occupies residues D1158–D1183. Positions S1277–Q1317 are disordered. S1316 carries the post-translational modification Phosphoserine.

It belongs to the FAM21 family. Component of the WASH core complex also described as WASH regulatory complex SHRC composed of WASHC1, WASHC2, WASHC3, WASHC4 and WASHC5; in the complex interacts (via N-terminus) directly with WASHC1. The WASH core complex associates via WASHC2 with the F-actin-capping protein dimer (formed by CAPZA1, CAPZA2 or CAPZA3 and CAPZB) in a transient or substoichiometric manner which was initially described as WASH complex. Interacts with VPS35; mediates the association with the retromer CSC complex. Interacts with FKBP15. Interacts with CCDC93, CCDC22, C16orf62 homolog; indicative for an association of the WASH core complex with the CCC complex. Directly interacts with TBC1D23.

The protein localises to the early endosome membrane. It localises to the cell membrane. Acts as a component of the WASH core complex that functions as a nucleation-promoting factor (NPF) at the surface of endosomes, where it recruits and activates the Arp2/3 complex to induce actin polymerization, playing a key role in the fission of tubules that serve as transport intermediates during endosome sorting. Mediates the recruitment of the WASH core complex to endosome membranes via binding to phospholipids and VPS35 of the retromer CSC. Mediates the recruitment of the F-actin-capping protein dimer to the WASH core complex probably promoting localized F-actin polymerization needed for vesicle scission. Via its C-terminus binds various phospholipids, most strongly phosphatidylinositol 4-phosphate (PtdIns-(4)P), phosphatidylinositol 5-phosphate (PtdIns-(5)P) and phosphatidylinositol 3,5-bisphosphate (PtdIns-(3,5)P2). Involved in the endosome-to-plasma membrane trafficking and recycling of SNX27-retromer-dependent cargo proteins, such as GLUT1. Required for the association of DNAJC13, ENTR1, ANKRD50 with retromer CSC subunit VPS35. Required for the endosomal recruitment of CCC complex subunits COMMD1, CCDC93 and C16orf62 homolog. This Cricetulus griseus (Chinese hamster) protein is WASH complex subunit 2.